The primary structure comprises 478 residues: Early growth response protein 4 (478 aa).

The disordered stretch occupies residues 15–37; the sequence is SKPTEGCAHTSPELPRLPARDAP. 3 consecutive C2H2-type zinc fingers follow at residues 372–396, 402–424, and 430–452; these read FACPVESCVRTFARSDELNRHLRIH, FQCRICLRNFSRSDHLTTHVRTH, and FACDVCGRRFARSDEKKRHSKVH.

Belongs to the EGR C2H2-type zinc-finger protein family.

Its subcellular location is the nucleus. Its function is as follows. Transcriptional regulator. Recognizes and binds to the DNA sequence 5'-GCGGGGGCG-3' (GSG). Activates the transcription of target genes whose products are required for mitogenesis and differentiation. The sequence is that of Early growth response protein 4 (Egr4) from Rattus norvegicus (Rat).